The primary structure comprises 348 residues: Fasciculation and elongation protein zeta-2 (348 aa).

The tract at residues 11–40 is disordered; it reads YEFQEPAGSVQEQENCNASPEAGAGAHAGG. 3 positions are modified to phosphoserine: S130, S171, and S190. Residues 206–280 adopt a coiled-coil conformation; that stretch reads ERVKRLSVSE…TAKKKKKLKS (75 aa). Residues 265 to 296 form a disordered region; it reads QKEHKETAKKKKKLKSGSSQNGRSERSHMPGT.

This sequence belongs to the zygin family. In terms of assembly, homodimer; disulfide-linked. May form heterodimers with FEZ1. Interacts with synaptotagmin.

In terms of biological role, involved in axonal outgrowth and fasciculation. This is Fasciculation and elongation protein zeta-2 (Fez2) from Mus musculus (Mouse).